A 397-amino-acid chain; its full sequence is Lymphoid enhancer-binding factor 1 (397 aa).

The CTNNB1-binding stretch occupies residues 1-60 (MPQLSGGGGGGDPELCATDEMIPFKDEGDPQKEKIFAEISHPEEEGDLADIKSSLVNESE). Lys-25 participates in a covalent cross-link: Glycyl lysine isopeptide (Lys-Gly) (interchain with G-Cter in SUMO). Positions 59 to 102 (SEIIPASNGHEVVRQAPSSQEPYHDKAREHPDEGKHPDGGLYNK) are disordered. The segment covering 80 to 96 (PYHDKAREHPDEGKHPD) has biased composition (basic and acidic residues). Ser-130 carries the phosphoserine modification. At Thr-153 the chain carries Phosphothreonine; by NLK. At Ser-164 the chain carries Phosphoserine; by NLK. 2 disordered regions span residues 164-191 (SPGSHPSHIPSDVNSKQGMSRHPPAPEI) and 266-296 (VKQEHPHTDSDLMHVKPQHEQRKEQEPKRPH). A Glycyl lysine isopeptide (Lys-Gly) (interchain with G-Cter in SUMO) cross-link involves residue Lys-267. A compositionally biased stretch (basic and acidic residues) spans 267–294 (KQEHPHTDSDLMHVKPQHEQRKEQEPKR). The HMG box DNA-binding region spans 297–365 (IKKPLNAFML…LHMQLYPGWS (69 aa)). The interval 367–397 (RDNYGKKKKRKREKLQESTSGTGPRMTAAYI) is disordered.

The protein belongs to the TCF/LEF family. As to quaternary structure, binds the armadillo repeat of CTNNB1 and forms a stable complex. Binds TLE1, ALYREF/THOC4, MDFI and MDFIC. Interacts with NLK. Interacts with EP300 and PIASG. Interacts with DAZAP2. In terms of processing, phosphorylated at Thr-153 and/or Ser-164 by NLK. Phosphorylation by NLK at these sites represses LEF1-mediated transcriptional activation of target genes of the canonical Wnt signaling pathway. Expressed in Vgamma1.1 and Vgamma2 gamma-delta T-cells, however not expressed in gamma-delta thymocytes fated for Il17a expression (at protein level). Expressed in alpha-beta T-cell lineages. Expressed in the thymus. Found in distinct epithelial cell compartments of the skin and is abundant in the hair-producing progenitors of the follicle.

It is found in the nucleus. Transcription factor that binds DNA in a sequence-specific manner. Participates in the Wnt signaling pathway. Activates transcription of target genes in the presence of CTNNB1 and EP300. PIASG antagonizes both Wnt-dependent and Wnt-independent activation by LEF1. TLE1, TLE2, TLE3 and TLE4 repress transactivation mediated by LEF1 and CTNNB1. Regulates T-cell receptor alpha enhancer function. Required for IL17A expressing gamma-delta T-cell maturation and development, via binding to regulator loci of BLK to modulate expression. Acts as a positive regulator of odontoblast differentiation during mesenchymal tooth germ formation, expression is repressed during the bell stage by MSX1-mediated inhibition of CTNNB1 signaling. May play a role in hair cell differentiation and follicle morphogenesis. This Mus musculus (Mouse) protein is Lymphoid enhancer-binding factor 1.